The following is a 473-amino-acid chain: Siroheme synthase 2 (473 aa).

The tract at residues 1–204 (MDYFPIFCQL…NDHVQADQHV (204 aa)) is precorrin-2 dehydrogenase /sirohydrochlorin ferrochelatase. Residues 22–23 (EI) and 43–44 (CE) each bind NAD(+). Residue S128 is modified to Phosphoserine. Residues 216-473 (GEVVLVGAGP…KVTECVAHVG (258 aa)) form a uroporphyrinogen-III C-methyltransferase region. P225 lines the S-adenosyl-L-methionine pocket. D248 acts as the Proton acceptor in catalysis. Catalysis depends on K270, which acts as the Proton donor. S-adenosyl-L-methionine is bound by residues 301–303 (GGD), I306, 331–332 (TA), M382, and G411.

The protein in the N-terminal section; belongs to the precorrin-2 dehydrogenase / sirohydrochlorin ferrochelatase family. It in the C-terminal section; belongs to the precorrin methyltransferase family.

The catalysed reaction is uroporphyrinogen III + 2 S-adenosyl-L-methionine = precorrin-2 + 2 S-adenosyl-L-homocysteine + H(+). It carries out the reaction precorrin-2 + NAD(+) = sirohydrochlorin + NADH + 2 H(+). It catalyses the reaction siroheme + 2 H(+) = sirohydrochlorin + Fe(2+). It functions in the pathway cofactor biosynthesis; adenosylcobalamin biosynthesis; precorrin-2 from uroporphyrinogen III: step 1/1. Its pathway is cofactor biosynthesis; adenosylcobalamin biosynthesis; sirohydrochlorin from precorrin-2: step 1/1. The protein operates within porphyrin-containing compound metabolism; siroheme biosynthesis; precorrin-2 from uroporphyrinogen III: step 1/1. It participates in porphyrin-containing compound metabolism; siroheme biosynthesis; siroheme from sirohydrochlorin: step 1/1. It functions in the pathway porphyrin-containing compound metabolism; siroheme biosynthesis; sirohydrochlorin from precorrin-2: step 1/1. Functionally, multifunctional enzyme that catalyzes the SAM-dependent methylations of uroporphyrinogen III at position C-2 and C-7 to form precorrin-2 via precorrin-1. Then it catalyzes the NAD-dependent ring dehydrogenation of precorrin-2 to yield sirohydrochlorin. Finally, it catalyzes the ferrochelation of sirohydrochlorin to yield siroheme. This chain is Siroheme synthase 2, found in Yersinia pseudotuberculosis serotype O:1b (strain IP 31758).